The following is a 339-amino-acid chain: tRNA methyltransferase 10 homolog A (339 aa).

Disordered regions lie at residues 1–90 and 282–339; these read MSSE…HDRK and DKAC…SLPH. Residues 14–35 are compositionally biased toward basic and acidic residues; that stretch reads NVDKKQGINEDQEESQKPRLGE. Residues 52-81 are a coiled coil; it reads KQWEEQRELRKQKRKEKRKRKKLERQCQME. Over residues 61–74 the composition is skewed to basic residues; sequence RKQKRKEKRKRKKL. The SAM-dependent MTase TRM10-type domain maps to 89–279; it reads RKRVRRDVVH…TILPQRKGAV (191 aa). The segment covering 300–309 has biased composition (acidic residues); that stretch reads GGSDSDSSEE. The span at 310 to 330 shows a compositional bias: basic and acidic residues; that stretch reads EYSRNELDSPHEEKQDKENHT. S336 carries the post-translational modification Phosphoserine.

The protein belongs to the class IV-like SAM-binding methyltransferase superfamily. TRM10 family. In terms of assembly, interacts with tRNA. As to expression, expressed in embryonic and fetal brain. It is expressed throughout the dorsal telencephalon at 8 and 11 weeks of gestation, with highest expression in ventricular zone and marginal zone. Detected in cerebellar cortex and nuclei, but not in dorsal telencephalon, at later stages.

Its subcellular location is the nucleus. The protein localises to the nucleolus. It carries out the reaction guanosine(9) in tRNA + S-adenosyl-L-methionine = N(1)-methylguanosine(9) in tRNA + S-adenosyl-L-homocysteine + H(+). In terms of biological role, S-adenosyl-L-methionine-dependent guanine N(1)-methyltransferase that catalyzes the formation of N(1)-methylguanine at position 9 (m1G9) in tRNAs. Probably not able to catalyze formation of N(1)-methyladenine at position 9 (m1A9) in tRNAs. The polypeptide is tRNA methyltransferase 10 homolog A (TRMT10A) (Homo sapiens (Human)).